A 503-amino-acid chain; its full sequence is Cytochrome P450 11B1, mitochondrial (503 aa).

The transit peptide at 1–24 (MALRAKAEVCMAVPWLSLQRAQAL) directs the protein to the mitochondrion. Cys-450 lines the heme pocket.

It belongs to the cytochrome P450 family. It depends on heme as a cofactor. Expressed in the zona fasciculata/reticularis of the adrenal cortex.

The protein localises to the mitochondrion inner membrane. The catalysed reaction is a steroid + 2 reduced [adrenodoxin] + O2 + 2 H(+) = an 11beta-hydroxysteroid + 2 oxidized [adrenodoxin] + H2O. The enzyme catalyses 11-deoxycortisol + 2 reduced [adrenodoxin] + O2 + 2 H(+) = cortisol + 2 oxidized [adrenodoxin] + H2O. It catalyses the reaction 21-hydroxyprogesterone + 2 reduced [adrenodoxin] + O2 + 2 H(+) = corticosterone + 2 oxidized [adrenodoxin] + H2O. It functions in the pathway steroid biosynthesis; glucocorticoid biosynthesis. It participates in steroid hormone biosynthesis. In terms of biological role, a cytochrome P450 monooxygenase involved in the biosynthesis of adrenal corticoids. Catalyzes a variety of reactions that are essential for many species, including detoxification, defense, and the formation of endogenous chemicals like steroid hormones. Steroid 11beta, 18- and 19-hydroxylase with preferred regioselectivity at 11beta, then 18, and lastly 19. Catalyzes the hydroxylation of 11-deoxycortisol and 11-deoxycorticosterone (21-hydroxyprogesterone) at 11beta position, yielding cortisol or corticosterone, respectively, but cannot produce aldosterone. Mechanistically, uses molecular oxygen inserting one oxygen atom into a substrate for hydroxylation and reducing the second into a water molecule. Two electrons are provided by NADPH via a two-protein mitochondrial transfer system comprising flavoprotein FDXR (adrenodoxin/ferredoxin reductase) and nonheme iron-sulfur protein FDX1 or FDX2 (adrenodoxin/ferredoxin). Due to its lack of 18-oxidation activity, it is incapable of generating aldosterone. Could also be involved in the androgen metabolic pathway. The polypeptide is Cytochrome P450 11B1, mitochondrial (Homo sapiens (Human)).